A 521-amino-acid polypeptide reads, in one-letter code: Vang-like protein 2-B (521 aa).

Residues 1–18 (MDNDSQYSGYSYKSGQSR) show a composition bias toward low complexity. The disordered stretch occupies residues 1-73 (MDNDSQYSGY…RDDNWGETTT (73 aa)). The Cytoplasmic portion of the chain corresponds to 1 to 108 (MDNDSQYSGY…AKLDCSRHLG (108 aa)). Basic residues predominate over residues 19–33 (SSRKHRDRRERHRSK). Positions 57–67 (ESTRGEDRDDN) are enriched in basic and acidic residues. Residues 109-129 (VVIAGALALLSFLTPIAFMLL) traverse the membrane as a helical segment. The Extracellular segment spans residues 130 to 147 (PQILWREDLEQCGTACEG). A helical membrane pass occupies residues 148–168 (LFISVAFKLLILLLGSWALFF). Topologically, residues 169–178 (RRPKAFFPRV) are cytoplasmic. The helical transmembrane segment at 179–199 (FVFRALLMVLVFLLVVSYWLF) threads the bilayer. The Extracellular portion of the chain corresponds to 200 to 218 (YGVRILESRDKNYQGIVQY). Residues 219–239 (AVSLVDALLFVHYLAVVLLEL) traverse the membrane as a helical segment. At 240–521 (RQLQPQFTIK…VMRLQSETSV (282 aa)) the chain is on the cytoplasmic side. The PDZ-binding motif lies at 518–521 (ETSV).

It belongs to the Vang family. As to quaternary structure, interacts with dvl/dsh. Interacts with prickle3. As to expression, during gastrulation, broadly expressed in the dorsal region in both mesodermal and neural tissues. From the neurula stages, expressed throughout the neural tube. In tailbud stages, expression declines in the anterior notochord but remains strong in the posterior notochord and in the neural tube. Also weakly expressed in the prenephritic region of late tailbud embryos.

Its subcellular location is the cell membrane. In terms of biological role, has a role in non-canonical Wnt/planar cell polarity (PCP) signaling; can recruit dvl/dsh and prickle from the cytoplasm to the plasma membrane. Acts in a PCP complex to regulate the polarized assembly of fibronectrin on the surface of the mesoderm during gastrulation. Regulates convergent extension in both dorsal mesoderm and neural tissue without affecting cell fate. Regulates neural fold closure during neurulation. May be required for cell surface localization of fzd3 and fzd6 in the inner ear. The sequence is that of Vang-like protein 2-B (vangl2-b) from Xenopus laevis (African clawed frog).